A 185-amino-acid polypeptide reads, in one-letter code: Large ribosomal subunit protein uL5 (185 aa).

This sequence belongs to the universal ribosomal protein uL5 family. As to quaternary structure, part of the 50S ribosomal subunit; part of the 5S rRNA/L5/L18/L25 subcomplex. Contacts the 5S rRNA and the P site tRNA. Forms a bridge to the 30S subunit in the 70S ribosome.

Functionally, this is one of the proteins that bind and probably mediate the attachment of the 5S RNA into the large ribosomal subunit, where it forms part of the central protuberance. In the 70S ribosome it contacts protein S13 of the 30S subunit (bridge B1b), connecting the 2 subunits; this bridge is implicated in subunit movement. Contacts the P site tRNA; the 5S rRNA and some of its associated proteins might help stabilize positioning of ribosome-bound tRNAs. The protein is Large ribosomal subunit protein uL5 of Rhodopseudomonas palustris (strain BisA53).